The primary structure comprises 848 residues: Alanine--tRNA ligase (848 aa).

His553, His557, Cys654, and His658 together coordinate Zn(2+).

The protein belongs to the class-II aminoacyl-tRNA synthetase family. Requires Zn(2+) as cofactor.

It localises to the cytoplasm. The catalysed reaction is tRNA(Ala) + L-alanine + ATP = L-alanyl-tRNA(Ala) + AMP + diphosphate. Functionally, catalyzes the attachment of alanine to tRNA(Ala) in a two-step reaction: alanine is first activated by ATP to form Ala-AMP and then transferred to the acceptor end of tRNA(Ala). Also edits incorrectly charged Ser-tRNA(Ala) and Gly-tRNA(Ala) via its editing domain. In Neorickettsia sennetsu (strain ATCC VR-367 / Miyayama) (Ehrlichia sennetsu), this protein is Alanine--tRNA ligase.